The primary structure comprises 298 residues: Probable endonuclease 4 (298 aa).

9 residues coordinate Zn(2+): histidine 69, histidine 111, glutamate 146, aspartate 180, histidine 183, histidine 215, aspartate 228, histidine 230, and glutamate 260.

Belongs to the AP endonuclease 2 family. Zn(2+) is required as a cofactor.

The enzyme catalyses Endonucleolytic cleavage to 5'-phosphooligonucleotide end-products.. Functionally, endonuclease IV plays a role in DNA repair. It cleaves phosphodiester bonds at apurinic or apyrimidinic (AP) sites, generating a 3'-hydroxyl group and a 5'-terminal sugar phosphate. The chain is Probable endonuclease 4 from Bacillus cereus (strain AH820).